A 525-amino-acid chain; its full sequence is Chromosomal replication initiator protein DnaA (525 aa).

The tract at residues methionine 1 to threonine 71 is domain I, interacts with DnaA modulators. The domain II stretch occupies residues threonine 71 to serine 188. The disordered stretch occupies residues alanine 160–aspartate 182. Residues proline 169–alanine 181 show a composition bias toward low complexity. Residues lysine 189 to serine 405 are domain III, AAA+ region. ATP is bound by residues glycine 233, glycine 235, lysine 236, and threonine 237. The segment at lysine 406–glycine 525 is domain IV, binds dsDNA.

The protein belongs to the DnaA family. Oligomerizes as a right-handed, spiral filament on DNA at oriC.

The protein resides in the cytoplasm. In terms of biological role, plays an essential role in the initiation and regulation of chromosomal replication. ATP-DnaA binds to the origin of replication (oriC) to initiate formation of the DNA replication initiation complex once per cell cycle. Binds the DnaA box (a 9 base pair repeat at the origin) and separates the double-stranded (ds)DNA. Forms a right-handed helical filament on oriC DNA; dsDNA binds to the exterior of the filament while single-stranded (ss)DNA is stabiized in the filament's interior. The ATP-DnaA-oriC complex binds and stabilizes one strand of the AT-rich DNA unwinding element (DUE), permitting loading of DNA polymerase. After initiation quickly degrades to an ADP-DnaA complex that is not apt for DNA replication. Binds acidic phospholipids. This chain is Chromosomal replication initiator protein DnaA, found in Burkholderia orbicola (strain MC0-3).